Here is a 540-residue protein sequence, read N- to C-terminus: Probable pectinesterase/pectinesterase inhibitor 60 (540 aa).

Positions 1-31 (MNIMMVQNISFLSLHLLLILLLCLRPLTTVA) are cleaved as a signal peptide. The interval 32-185 (DGNSTNIDGW…SHLISNCLAV (154 aa)) is pectinesterase inhibitor 60. Residues Asn-34, Asn-91, Asn-95, Asn-120, Asn-161, and Asn-195 are each glycosylated (N-linked (GlcNAc...) asparagine). Positions 225–526 (NLVVAKDGSG…FSVGKFIAGT (302 aa)) are pectinesterase 60. 2 residues coordinate substrate: Thr-302 and Gln-332. Asp-355 serves as the catalytic Proton donor; for pectinesterase activity. The cysteines at positions 369 and 389 are disulfide-linked. Residue Asp-376 is the Nucleophile; for pectinesterase activity of the active site. Substrate contacts are provided by Arg-444 and Trp-446.

It in the N-terminal section; belongs to the PMEI family. This sequence in the C-terminal section; belongs to the pectinesterase family. Expressed in siliques.

The protein localises to the secreted. Its subcellular location is the cell wall. It carries out the reaction [(1-&gt;4)-alpha-D-galacturonosyl methyl ester](n) + n H2O = [(1-&gt;4)-alpha-D-galacturonosyl](n) + n methanol + n H(+). Its pathway is glycan metabolism; pectin degradation; 2-dehydro-3-deoxy-D-gluconate from pectin: step 1/5. Functionally, acts in the modification of cell walls via demethylesterification of cell wall pectin. The sequence is that of Probable pectinesterase/pectinesterase inhibitor 60 (PME60) from Arabidopsis thaliana (Mouse-ear cress).